A 156-amino-acid chain; its full sequence is Small ribosomal subunit protein uS7 (156 aa).

This sequence belongs to the universal ribosomal protein uS7 family. As to quaternary structure, part of the 30S ribosomal subunit. Contacts proteins S9 and S11.

Functionally, one of the primary rRNA binding proteins, it binds directly to 16S rRNA where it nucleates assembly of the head domain of the 30S subunit. Is located at the subunit interface close to the decoding center, probably blocks exit of the E-site tRNA. This is Small ribosomal subunit protein uS7 from Shigella dysenteriae serotype 1 (strain Sd197).